Reading from the N-terminus, the 490-residue chain is Acetyl-coenzyme A carboxylase carboxyl transferase subunit beta, chloroplastic (490 aa).

Residues 221 to 490 form the CoA carboxyltransferase N-terminal domain; it reads LWVQCENCYG…PLNQKSSKIK (270 aa). Residues C225, C228, C244, and C247 each contribute to the Zn(2+) site. The C4-type zinc-finger motif lies at 225–247; that stretch reads CENCYGLNYKKFLKSKMNICEQC.

Belongs to the AccD/PCCB family. Acetyl-CoA carboxylase is a heterohexamer composed of biotin carboxyl carrier protein, biotin carboxylase and 2 subunits each of ACCase subunit alpha and ACCase plastid-coded subunit beta (accD). The cofactor is Zn(2+). Expressed in leaves, ripening and mature fruit.

The protein resides in the plastid. It is found in the chloroplast stroma. It localises to the chromoplast stroma. It catalyses the reaction N(6)-carboxybiotinyl-L-lysyl-[protein] + acetyl-CoA = N(6)-biotinyl-L-lysyl-[protein] + malonyl-CoA. The protein operates within lipid metabolism; malonyl-CoA biosynthesis; malonyl-CoA from acetyl-CoA: step 1/1. Component of the acetyl coenzyme A carboxylase (ACC) complex. Biotin carboxylase (BC) catalyzes the carboxylation of biotin on its carrier protein (BCCP) and then the CO(2) group is transferred by the transcarboxylase to acetyl-CoA to form malonyl-CoA. Is up-regulated upon chromoplast differentiation, presumably for fatty acid biosynthesis. The chain is Acetyl-coenzyme A carboxylase carboxyl transferase subunit beta, chloroplastic from Solanum lycopersicum (Tomato).